A 236-amino-acid polypeptide reads, in one-letter code: Protein INCA1 (236 aa).

Ser-23 carries the phosphoserine modification. Positions 75 to 99 (GLYPPEQLPPPEMLWRRKKRRPCLE) are interaction with CCNA1 and CCNA1/CDK2 complex; essential for CDK2 inhibitory activity. The Nuclear localization signal signature appears at 90–95 (RRKKRR). Thr-182 is subject to Phosphothreonine. Phosphoserine is present on residues Ser-191 and Ser-194.

This sequence belongs to the INCA family. Interacts with CCNA1. Interacts with CCNA2, CCNB1 and CCNE1. Found in a complex with CCNA1 and CDK2. Interacts with ZNF16; the interaction inhibits INCA1 activity and induces the cell cycle process. Interacts with SPACA9. Interacts with the CCNA1/CDK2 complex. Interacts with ING5, DAZAP2, RNF26, USP15, SPOUT1, DPH7, TRIM26 and RAB5C. Post-translationally, phosphorylated when part of a complex with CCNA1 and CDK2. Strongly phosphorylated by CDK2 on its C-terminal region spanning amino acid 149-221. Less intensively phosphorylated by CDK2 on its first 75 amino acid residues. As to expression, detected in testis, and at lower levels in ovary. Detected at very low levels in testis tumors. Down-regulated in bone marrow cells in acute myeloid and lymphoid leukemia patients as compared with normal bone marrow cells.

It is found in the nucleus. The protein localises to the cytoplasm. Functionally, binds to CDK2-bound cyclins and inhibits the kinase activity of CDK2; binding to cyclins is critical for its function as CDK inhibitor. Inhibits cell growth and cell proliferation and may play a role in cell cycle control. Required for ING5-mediated regulation of S-phase progression, enhancement of Fas-induced apoptosis and inhibition of cell growth. The chain is Protein INCA1 (INCA1) from Homo sapiens (Human).